A 122-amino-acid chain; its full sequence is FMN-binding protein (122 aa).

In terms of assembly, monomer and homodimer. FMN serves as cofactor.

Its subcellular location is the cytoplasm. Its function is as follows. Functions as a redox protein with a potential of -325 mV. In Nitratidesulfovibrio vulgaris (strain DSM 19637 / Miyazaki F) (Desulfovibrio vulgaris), this protein is FMN-binding protein.